We begin with the raw amino-acid sequence, 397 residues long: Chorismate synthase (397 aa).

Residues Arg40 and Arg46 each coordinate NADP(+). FMN is bound by residues 129–131 (RSS), 257–258 (QA), Gly302, 317–321 (KPISS), and Arg343.

Belongs to the chorismate synthase family. In terms of assembly, homotetramer. Requires FMNH2 as cofactor.

It catalyses the reaction 5-O-(1-carboxyvinyl)-3-phosphoshikimate = chorismate + phosphate. It functions in the pathway metabolic intermediate biosynthesis; chorismate biosynthesis; chorismate from D-erythrose 4-phosphate and phosphoenolpyruvate: step 7/7. Functionally, catalyzes the anti-1,4-elimination of the C-3 phosphate and the C-6 proR hydrogen from 5-enolpyruvylshikimate-3-phosphate (EPSP) to yield chorismate, which is the branch point compound that serves as the starting substrate for the three terminal pathways of aromatic amino acid biosynthesis. This reaction introduces a second double bond into the aromatic ring system. This chain is Chorismate synthase, found in Chlorobium luteolum (strain DSM 273 / BCRC 81028 / 2530) (Pelodictyon luteolum).